The primary structure comprises 266 residues: Phosphatidylglycerol--prolipoprotein diacylglyceryl transferase (266 aa).

7 helical membrane passes run 10–30 (VALA…LIGI), 56–76 (LVFW…VLFY), 92–112 (WKGG…VWWF), 120–140 (FFQL…AGRI), 171–191 (PSQL…LWLF), 199–219 (ASVS…VEFV), and 233–253 (WLTM…ALMV). Arg139 provides a ligand contact to a 1,2-diacyl-sn-glycero-3-phospho-(1'-sn-glycerol).

It belongs to the Lgt family.

The protein localises to the cell inner membrane. The catalysed reaction is L-cysteinyl-[prolipoprotein] + a 1,2-diacyl-sn-glycero-3-phospho-(1'-sn-glycerol) = an S-1,2-diacyl-sn-glyceryl-L-cysteinyl-[prolipoprotein] + sn-glycerol 1-phosphate + H(+). The protein operates within protein modification; lipoprotein biosynthesis (diacylglyceryl transfer). Its function is as follows. Catalyzes the transfer of the diacylglyceryl group from phosphatidylglycerol to the sulfhydryl group of the N-terminal cysteine of a prolipoprotein, the first step in the formation of mature lipoproteins. The sequence is that of Phosphatidylglycerol--prolipoprotein diacylglyceryl transferase from Pseudomonas aeruginosa (strain LESB58).